The primary structure comprises 364 residues: Protein trichome birefringence-like 40 (364 aa).

Residues 9–25 form a helical; Signal-anchor for type II membrane protein membrane-spanning segment; it reads LASLSLILFSSFPGLLA. A GDS motif motif is present at residues 118–120; sequence GDS. The DCXHWCLPGXXDXWN motif signature appears at 341–355; the sequence is DCSHWCLPGLPDTWN.

The protein belongs to the PC-esterase family. TBL subfamily.

The protein resides in the membrane. Its function is as follows. May act as a bridging protein that binds pectin and other cell wall polysaccharides. Probably involved in maintaining esterification of pectins. May be involved in the specific O-acetylation of cell wall polymers. In Arabidopsis thaliana (Mouse-ear cress), this protein is Protein trichome birefringence-like 40 (TBL40).